We begin with the raw amino-acid sequence, 955 residues long: Leucine-rich repeat-containing G-protein coupled receptor 4 (955 aa).

Residues 1-21 form the signal peptide; it reads MGCPGWPLALFALLLASCSGG. Residues 22-547 lie on the Extracellular side of the membrane; the sequence is PSGVSSPAPC…LLGSWMIRLT (526 aa). Residues 26-59 enclose the LRRNT domain; the sequence is SSPAPCPAPCACDLDGGADCSGKGLVTVPDGLSV. 2 disulfides stabilise this stretch: cysteine 31-cysteine 37 and cysteine 35-cysteine 45. LRR repeat units lie at residues 57 to 81, 83 to 105, 106 to 129, 131 to 153, 155 to 177, 178 to 201, 203 to 225, 226 to 249, 250 to 272, and 274 to 296; these read LSVFTHSLDLSMNNITKLPEGAFKG, PYLEELRLAGNDLSIIHPMALSG, LKELKVLTLQNNQLKTVPSESLKG, VSLQSLRLDANHIVTVPEDSFEG, VQLRHLWLDDNSLTEVPIRPLSN, LPSLQALTLALNKISHIPDYAFSN, SSLVVLHLHNNKIRTLGPHCFHG, LDNLEALDLNYNNLIDFPDSIRSL, PNLKELGFHSNSITIIPDGAFVK, and PLLRTIHLYDNPLSFVGNSAFQN. Asparagine 201 carries N-linked (GlcNAc...) asparagine glycosylation. N-linked (GlcNAc...) asparagine glycosylation is found at asparagine 296 and asparagine 316. LRR repeat units lie at residues 320–343, 345–365, 366–389, 390–413, and 415–437; these read TNNLESLTLTGTKIRSIPIKFCQE, KMLRTLDLSYNEISALVGFEG, CSSLEEVYLQNNQIQEVQNETFQG, LAALRMLDLSRNRIHTIHKEAFVT, and KALTNLDLSFNDLTAFPTAGLHG. Cysteine 341 and cysteine 366 form a disulfide bridge. The N-linked (GlcNAc...) asparagine glycan is linked to asparagine 384. Intrachain disulfides connect cysteine 472–cysteine 525 and cysteine 473–cysteine 478. The helical transmembrane segment at 548 to 568 threads the bilayer; the sequence is VWFIFLLALIFNVIVIVTMFA. At 569–578 the chain is on the cytoplasmic side; the sequence is SCSQLTSSKL. Residues 579–599 traverse the membrane as a helical segment; the sequence is FIGLIAVSNLFMGVYTGTLTV. The Extracellular segment spans residues 600 to 623; that stretch reads LDTISWGQFAEFGIWWETGNGCKV. Residues cysteine 621 and cysteine 696 are joined by a disulfide bond. Residues 624–644 form a helical membrane-spanning segment; it reads AGFLAIFSSESAIFFLMLAAI. The Cytoplasmic portion of the chain corresponds to 645 to 666; it reads ERSLSAKDIIKKEKHQHLRKFQ. A helical transmembrane segment spans residues 667 to 687; it reads VASLLAVLLAAAAGCLPLFHI. The Extracellular portion of the chain corresponds to 688-706; the sequence is GEFSSSPLCLPFPTGETPS. A helical transmembrane segment spans residues 707–727; it reads LGFTVTLVLLNSLAFLIMVIT. The Cytoplasmic segment spans residues 728–759; the sequence is YTKLYCTIEKEDLSENAESSMIKHVAWLIFTN. The helical transmembrane segment at 760–780 threads the bilayer; that stretch reads CIFFCPVAFFSFAPLITAIYI. Topologically, residues 781 to 786 are extracellular; that stretch reads SPEIMK. Residues 787-807 form a helical membrane-spanning segment; sequence SVTLIFLPLPACLNPVLYVFF. Residues 808-955 lie on the Cytoplasmic side of the membrane; the sequence is NPKFKEDWKL…YAYNIPRMKD (148 aa).

The protein belongs to the G-protein coupled receptor 1 family.

It is found in the cell membrane. Its function is as follows. Receptor for R-spondins that potentiates the canonical Wnt signaling pathway and is involved in the formation of various organs. Upon binding to R-spondins (RSPO1, RSPO2, RSPO3 or RSPO4), associates with phosphorylated LRP6 and frizzled receptors that are activated by extracellular Wnt receptors, triggering the canonical Wnt signaling pathway to increase expression of target genes. In contrast to classical G-protein coupled receptors, does not activate heterotrimeric G-proteins to transduce the signal. Its function as activator of the Wnt signaling pathway is required for the development of various organs, including liver, kidney, intestine, bone, reproductive tract and eye. May play a role in regulating the circadian rhythms of plasma lipids. Required for proper development of GnRH neurons (gonadotropin-releasing hormone expressing neurons) that control the release of reproductive hormones from the pituitary gland. The protein is Leucine-rich repeat-containing G-protein coupled receptor 4 (lgr4) of Xenopus tropicalis (Western clawed frog).